A 100-amino-acid chain; its full sequence is Small ribosomal subunit protein uS14c (100 aa).

It belongs to the universal ribosomal protein uS14 family. Part of the 30S ribosomal subunit.

The protein localises to the plastid. It is found in the chloroplast. Its function is as follows. Binds 16S rRNA, required for the assembly of 30S particles. In Chara vulgaris (Common stonewort), this protein is Small ribosomal subunit protein uS14c.